The following is a 670-amino-acid chain: MTGILPTYQRFVNGVPVPSISRRSFRLREKYLIVSVLLTFGIVWLGALFYLPEFKSSNSVNDSVYNVYKRIQKAGPELLMPPPLAQNDVGDFPVIGIAHHGEGGDDPHVIEDRNRLRAKIEEDMGMKVLERPQFDVAPSVSSSRGPSKPPVDAIEEPAVGNNAANKDVSPSGPKAESSDKFVAVALAPGADPEIKHKLETVKKMMLHAWYNYKLYAWGKNELKPMSKRAHLSSVFGAGELGATIVDGLDTLYLMGLNDEFREGRDWVAEHLHINEIDSDLSVFETTIRFVGGLLSCYALTGDTMFRDKAAEVGDALLPAFDTPTGLPYALINPSTKASRQYHWAGPNSILSELGTLHLEFTYLSDVTGRDIYRQKVSRIREVLDQIDKPGDLYPNFINPRTGQWGQRHMSLGALGDSFYEYLLKAWLMSGGADEQARIMFDTAMQAALDKMLRVSPSGLAYLAELKYGRIIEEKMDHLSCFAGGMFALASTTLDNSMSERYMDVAKKLTNTCHESYARSETKLGPEAFRFSNAAEARAQKSNEKVYLLRPETFESYFIMWRLTKQQMYRDWAWEAVQALEKHCRVEGGYTGLVNVYHANPQGDDVQQSFFLAETLKYLYLIFGDDSFLPLDEWVFNTEAHPFPIRGKNPLYRAVDKPVLPEPAHAQNNRI.

The Cytoplasmic portion of the chain corresponds to Met1–Lys30. A helical; Signal-anchor for type II membrane protein membrane pass occupies residues Tyr31–Leu51. At Pro52 to Ile670 the chain is on the lumenal side. Residue Asn61 is glycosylated (N-linked (GlcNAc...) asparagine). A disordered region spans residues Asp135 to Ser177. A disulfide bridge connects residues Cys480 and Cys512. The Proton donor role is filled by Glu526. A Ca(2+)-binding site is contributed by Thr637.

Belongs to the glycosyl hydrolase 47 family. The cofactor is Ca(2+). Post-translationally, N-glycosylated. Contains high mannose-type oligosaccharides.

It is found in the golgi apparatus membrane. It carries out the reaction N(4)-(alpha-D-Man-(1-&gt;2)-alpha-D-Man-(1-&gt;2)-alpha-D-Man-(1-&gt;3)-[alpha-D-Man-(1-&gt;2)-alpha-D-Man-(1-&gt;3)-[alpha-D-Man-(1-&gt;2)-alpha-D-Man-(1-&gt;6)]-alpha-D-Man-(1-&gt;6)]-beta-D-Man-(1-&gt;4)-beta-D-GlcNAc-(1-&gt;4)-beta-D-GlcNAc)-L-asparaginyl-[protein] (N-glucan mannose isomer 9A1,2,3B1,2,3) + 4 H2O = N(4)-(alpha-D-Man-(1-&gt;3)-[alpha-D-Man-(1-&gt;3)-[alpha-D-Man-(1-&gt;6)]-alpha-D-Man-(1-&gt;6)]-beta-D-Man-(1-&gt;4)-beta-D-GlcNAc-(1-&gt;4)-beta-D-GlcNAc)-L-asparaginyl-[protein] (N-glucan mannose isomer 5A1,2) + 4 beta-D-mannose. It catalyses the reaction N(4)-(alpha-D-Man-(1-&gt;2)-alpha-D-Man-(1-&gt;2)-alpha-D-Man-(1-&gt;3)-[alpha-D-Man-(1-&gt;3)-[alpha-D-Man-(1-&gt;2)-alpha-D-Man-(1-&gt;6)]-alpha-D-Man-(1-&gt;6)]-beta-D-Man-(1-&gt;4)-beta-D-GlcNAc-(1-&gt;4)-beta-D-GlcNAc)-L-asparaginyl-[protein] (N-glucan mannose isomer 8A1,2,3B1,3) + 3 H2O = N(4)-(alpha-D-Man-(1-&gt;3)-[alpha-D-Man-(1-&gt;3)-[alpha-D-Man-(1-&gt;6)]-alpha-D-Man-(1-&gt;6)]-beta-D-Man-(1-&gt;4)-beta-D-GlcNAc-(1-&gt;4)-beta-D-GlcNAc)-L-asparaginyl-[protein] (N-glucan mannose isomer 5A1,2) + 3 beta-D-mannose. Its pathway is protein modification; protein glycosylation. Its activity is regulated as follows. Strongly inhibited by 1-deoxymannojirimycin, an inhibitor of class I alpha-mannosidases, and by EDTA. EDTA inhibition is reversed by the addition of calcium, but not of magnesium. Its function is as follows. Involved in the maturation of Asn-linked oligosaccharides. Converts Man(9)GlcNAc(2) to Man(5)GlcNAc(2) primarily through the Man(7)GlcNAc(2) isomer C processing intermediate. The polypeptide is Mannosyl-oligosaccharide alpha-1,2-mannosidase IA (Spodoptera frugiperda (Fall armyworm)).